A 687-amino-acid chain; its full sequence is POZ (BTB) and AT hook-containing zinc finger 1 (687 aa).

The region spanning 41-130 (CDVLLRVGDE…AYTSRIVVRL (90 aa)) is the BTB domain. Over residues 250–260 (PFPNVASSAPP) the composition is skewed to polar residues. The tract at residues 250 to 279 (PFPNVASSAPPLTSKRGRGRPRKANLLDSM) is disordered. Residues 292-314 (LPCGLCGKVFTDANRLRQHEAQH) form a C2H2-type 1 zinc finger. A disordered region spans residues 332 to 351 (GENGLPISEDPDGPRKRSRT). C2H2-type zinc fingers lie at residues 355 to 377 (VACE…KLSH), 383 to 405 (YSCP…VRSH), 413 to 436 (YICQ…KQVH), 442 to 464 (HKCQ…LACH), and 495 to 517 (NFCS…VKTH). The disordered stretch occupies residues 564 to 587 (SYGDLSDASDLKTPEKQSANGSFS). Residues 605-628 (YPCPECGSFFRSKSYLNKHIQKVH) form a C2H2-type 7 zinc finger.

In terms of assembly, homodimer. Interacts with RNF4. Interacts (via C-terminus) with TP53; this interaction inhibits TP53 ability to activate transcription. As to expression, widely expressed at high levels during embryogenesis, especially in the central nervous system, especially to the actively proliferating neuroblasts in the periventricular neocortical neuroepithelium, in the telencephalic cortical plate and in the hippocampus. Also expressed in a stage-specific manner in the mouse germinal epithelium. While strongly expressed during brain development,m its expression turns down in adult brain.

The protein localises to the nucleus. In terms of biological role, transcriptional regulator that plays a role in many biological processes such as embryogenesis, senescence, T-cell development or neurogenesis. Interacts with the TP53 protein to control genes that are important in proliferation and in the DNA-damage response. Mechanistically, the interaction inhibits the DNA binding and transcriptional activity of TP53/p53. Part of the transcriptional network modulating regulatory T-cell development and controls the generation of the regulatory T-cell pool under homeostatic conditions. The polypeptide is POZ (BTB) and AT hook-containing zinc finger 1 (Mus musculus (Mouse)).